We begin with the raw amino-acid sequence, 89 residues long: DNA/RNA-binding protein Alba 1 (89 aa).

The protein belongs to the histone-like Alba family.

It localises to the cytoplasm. The protein resides in the chromosome. Its function is as follows. Binds double-stranded DNA tightly but without sequence specificity. Involved in DNA compaction. The chain is DNA/RNA-binding protein Alba 1 from Archaeoglobus fulgidus (strain ATCC 49558 / DSM 4304 / JCM 9628 / NBRC 100126 / VC-16).